The chain runs to 250 residues: 5'-nucleotidase SurE (250 aa).

Residues aspartate 9, aspartate 10, serine 40, and asparagine 92 each coordinate a divalent metal cation.

It belongs to the SurE nucleotidase family. A divalent metal cation is required as a cofactor.

The protein localises to the cytoplasm. The catalysed reaction is a ribonucleoside 5'-phosphate + H2O = a ribonucleoside + phosphate. Functionally, nucleotidase that shows phosphatase activity on nucleoside 5'-monophosphates. This Shewanella pealeana (strain ATCC 700345 / ANG-SQ1) protein is 5'-nucleotidase SurE.